The primary structure comprises 47 residues: Large ribosomal subunit protein bL34 (47 aa).

This sequence belongs to the bacterial ribosomal protein bL34 family.

In Nocardia farcinica (strain IFM 10152), this protein is Large ribosomal subunit protein bL34.